The primary structure comprises 41 residues: Divisome-associated membrane protein Blr (41 aa).

Over 1–3 the chain is Cytoplasmic; that stretch reads MNR. A helical membrane pass occupies residues 4–24; it reads LIELTGWIVLVVSVILLGVAS. Topologically, residues 25 to 41 are periplasmic; sequence HIDNYQPPEQSASVQHK.

In terms of assembly, interacts with FtsL and several other divisomal proteins, including FtsI, FtsK, FtsN, FtsQ, FtsW and YmgF. In terms of processing, the N-terminus is blocked.

It localises to the cell inner membrane. Its function is as follows. Component of the cell division machinery, which is probably involved in the stabilization of the divisome under certain stress conditions. This chain is Divisome-associated membrane protein Blr (blr), found in Escherichia coli (strain K12).